We begin with the raw amino-acid sequence, 290 residues long: Acetylglutamate kinase (290 aa).

Substrate is bound by residues 64-65 (GG), Arg86, and Asn183.

Belongs to the acetylglutamate kinase family. ArgB subfamily.

The protein localises to the cytoplasm. The catalysed reaction is N-acetyl-L-glutamate + ATP = N-acetyl-L-glutamyl 5-phosphate + ADP. It functions in the pathway amino-acid biosynthesis; L-arginine biosynthesis; N(2)-acetyl-L-ornithine from L-glutamate: step 2/4. Functionally, catalyzes the ATP-dependent phosphorylation of N-acetyl-L-glutamate. This chain is Acetylglutamate kinase, found in Halothermothrix orenii (strain H 168 / OCM 544 / DSM 9562).